A 169-amino-acid chain; its full sequence is MEIIQKFGLEAKLFLFQLINFLIIVFILKKFLFAPLKKILDERKRKIEQSLQDAENAKIALENASEKKKNILAKAKSSADTLMATVKVSIKETKEKAVIEAKQRSEQIIDEAKQKAATEFESMNKKIGKISVDISGKVMSKVLSDLFTETEKQKLMSRALEKIDENIKN.

A helical transmembrane segment spans residues 13 to 33 (LFLFQLINFLIIVFILKKFLF).

Belongs to the ATPase B chain family. In terms of assembly, F-type ATPases have 2 components, F(1) - the catalytic core - and F(0) - the membrane proton channel. F(1) has five subunits: alpha(3), beta(3), gamma(1), delta(1), epsilon(1). F(0) has three main subunits: a(1), b(2) and c(10-14). The alpha and beta chains form an alternating ring which encloses part of the gamma chain. F(1) is attached to F(0) by a central stalk formed by the gamma and epsilon chains, while a peripheral stalk is formed by the delta and b chains.

Its subcellular location is the cell inner membrane. Its function is as follows. F(1)F(0) ATP synthase produces ATP from ADP in the presence of a proton or sodium gradient. F-type ATPases consist of two structural domains, F(1) containing the extramembraneous catalytic core and F(0) containing the membrane proton channel, linked together by a central stalk and a peripheral stalk. During catalysis, ATP synthesis in the catalytic domain of F(1) is coupled via a rotary mechanism of the central stalk subunits to proton translocation. Functionally, component of the F(0) channel, it forms part of the peripheral stalk, linking F(1) to F(0). The polypeptide is ATP synthase subunit b (Endomicrobium trichonymphae).